We begin with the raw amino-acid sequence, 217 residues long: MEFLVEDLGLVPYGEAWAYQKRVHREVVAGNRPPTLLLLEHPRVITLGRKATGENLLFPESWYRENGFELYWVERGGDVTYHGPGQLVGYPIFPVGREVRRFLRQIEEAIVRVAAGYGISAYPTPGYAGVWVGEDKLCAIGVAVKEGVSFHGFALNVNTDLNDFTVIVPCGLKGKGVTSLEKLLGRKVPMEEAKARVVAAFAEVFGLRPVEGSVHEA.

Residues 30–209 (GNRPPTLLLL…AFAEVFGLRP (180 aa)) form the BPL/LPL catalytic domain. Substrate contacts are provided by residues 75–82 (RGGDVTYH), 139–141 (AIG), and 152–154 (GFA). The Acyl-thioester intermediate role is filled by C170.

This sequence belongs to the LipB family.

The protein localises to the cytoplasm. The enzyme catalyses octanoyl-[ACP] + L-lysyl-[protein] = N(6)-octanoyl-L-lysyl-[protein] + holo-[ACP] + H(+). The protein operates within protein modification; protein lipoylation via endogenous pathway; protein N(6)-(lipoyl)lysine from octanoyl-[acyl-carrier-protein]: step 1/2. In terms of biological role, catalyzes the transfer of endogenously produced octanoic acid from octanoyl-acyl-carrier-protein onto the lipoyl domains of lipoate-dependent enzymes. Lipoyl-ACP can also act as a substrate although octanoyl-ACP is likely to be the physiological substrate. The protein is Octanoyltransferase of Thermus thermophilus (strain ATCC 27634 / DSM 579 / HB8).